Consider the following 88-residue polypeptide: Probable glutaredoxin ssr2061 (88 aa).

A disulfide bridge connects residues Cys-15 and Cys-18.

The protein belongs to the glutaredoxin family.

Functionally, has a glutathione-disulfide oxidoreductase activity in the presence of NADPH and glutathione reductase. Reduces low molecular weight disulfides and proteins. The protein is Probable glutaredoxin ssr2061 of Synechocystis sp. (strain ATCC 27184 / PCC 6803 / Kazusa).